Consider the following 278-residue polypeptide: 3-methyl-2-oxobutanoate hydroxymethyltransferase (278 aa).

Mg(2+) is bound by residues Asp43 and Asp82. Residues 43–44, Asp82, and Lys112 each bind 3-methyl-2-oxobutanoate; that span reads DS. Glu114 contacts Mg(2+). Glu181 (proton acceptor) is an active-site residue.

The protein belongs to the PanB family. In terms of assembly, homodecamer; pentamer of dimers. The cofactor is Mg(2+).

The protein resides in the cytoplasm. The catalysed reaction is 3-methyl-2-oxobutanoate + (6R)-5,10-methylene-5,6,7,8-tetrahydrofolate + H2O = 2-dehydropantoate + (6S)-5,6,7,8-tetrahydrofolate. It participates in cofactor biosynthesis; (R)-pantothenate biosynthesis; (R)-pantoate from 3-methyl-2-oxobutanoate: step 1/2. In terms of biological role, catalyzes the reversible reaction in which hydroxymethyl group from 5,10-methylenetetrahydrofolate is transferred onto alpha-ketoisovalerate to form ketopantoate. This Bacillus cereus (strain AH187) protein is 3-methyl-2-oxobutanoate hydroxymethyltransferase.